A 101-amino-acid chain; its full sequence is Urease subunit beta (101 aa).

This sequence belongs to the urease beta subunit family. As to quaternary structure, heterotrimer of UreA (gamma), UreB (beta) and UreC (alpha) subunits. Three heterotrimers associate to form the active enzyme.

Its subcellular location is the cytoplasm. It carries out the reaction urea + 2 H2O + H(+) = hydrogencarbonate + 2 NH4(+). Its pathway is nitrogen metabolism; urea degradation; CO(2) and NH(3) from urea (urease route): step 1/1. In Burkholderia orbicola (strain MC0-3), this protein is Urease subunit beta.